A 478-amino-acid polypeptide reads, in one-letter code: Microfibrillar-associated protein 1 (478 aa).

Residues 1-20 show a composition bias toward low complexity; the sequence is MSAATAAAAASGIQSTAGAI. Disordered stretches follow at residues 1–276 and 456–478; these read MSAA…RRAT and NEHAGGMRQQFDKPTGSKRKKME. Positions 53 to 62 are enriched in acidic residues; that stretch reads SSEESDDDDF. The span at 107–128 shows a compositional bias: basic and acidic residues; sequence DDPRLRRLRQRPVDMEDMERER. The span at 140–153 shows a compositional bias: acidic residues; the sequence is IMESDSEDEEEDEG. Positions 160-170 are enriched in polar residues; that stretch reads RGTNKITLASE. A compositionally biased stretch (acidic residues) spans 171-181; sequence SDTDAELSDTE. Over residues 197 to 212 the composition is skewed to basic and acidic residues; that stretch reads QREEEVLQKEDEKQSE. A compositionally biased stretch (acidic residues) spans 214–231; the sequence is SESESSEYEEETESEEDN. Positions 229 to 478 are interaction with Prp38; that stretch reads EDNEPRLKPL…PTGSKRKKME (250 aa). Positions 245-268 are enriched in basic and acidic residues; it reads RATIQEKEREAQKQKQLEAEAKRA.

Belongs to the MFAP1 family. As to quaternary structure, component of the spliceosome B complex. Interacts (via C-terminus) with Prp38.

It localises to the nucleus. In terms of biological role, required for pre-mRNA splicing. The sequence is that of Microfibrillar-associated protein 1 from Drosophila melanogaster (Fruit fly).